Here is a 432-residue protein sequence, read N- to C-terminus: Phosphomethylpyrimidine synthase (432 aa).

Substrate is bound by residues asparagine 66, methionine 95, tyrosine 124, histidine 163, 185 to 187 (SRG), 226 to 229 (DGLR), and glutamate 265. Residue histidine 269 participates in Zn(2+) binding. Residue tyrosine 292 coordinates substrate. Residue histidine 333 participates in Zn(2+) binding. Positions 409, 412, and 416 each coordinate [4Fe-4S] cluster.

It belongs to the ThiC family. [4Fe-4S] cluster is required as a cofactor.

The enzyme catalyses 5-amino-1-(5-phospho-beta-D-ribosyl)imidazole + S-adenosyl-L-methionine = 4-amino-2-methyl-5-(phosphooxymethyl)pyrimidine + CO + 5'-deoxyadenosine + formate + L-methionine + 3 H(+). It participates in cofactor biosynthesis; thiamine diphosphate biosynthesis. Catalyzes the synthesis of the hydroxymethylpyrimidine phosphate (HMP-P) moiety of thiamine from aminoimidazole ribotide (AIR) in a radical S-adenosyl-L-methionine (SAM)-dependent reaction. This is Phosphomethylpyrimidine synthase from Caldanaerobacter subterraneus subsp. tengcongensis (strain DSM 15242 / JCM 11007 / NBRC 100824 / MB4) (Thermoanaerobacter tengcongensis).